The chain runs to 34 residues: DCLGWFKGCDPDNDKCCEGYKCNRRDKWCKYKLW.

Cystine bridges form between cysteine 2/cysteine 17, cysteine 9/cysteine 22, and cysteine 16/cysteine 29.

This sequence belongs to the neurotoxin 10 (Hwtx-1) family. 61 (VSTX3) subfamily. As to expression, expressed by the venom gland.

Its subcellular location is the secreted. Its function is as follows. Potent voltage-gated sodium channel blocker (IC(50)=190 nM and 210 nM on human and rat Nav1.3/SCN3A respectively, 430 nM on human Nav1.7/SCN9A, 770 nM and 290 nM on human and rat Nav1.8/SCN10A, respectively). Binds the voltage-sensor domain of the potassium channel KvAP (from Aeropyrum pernix) and weakly inhibits this channel. The sequence is that of Voltage sensor toxin 3 from Grammostola rosea (Chilean rose tarantula).